Reading from the N-terminus, the 671-residue chain is UvrABC system protein B (671 aa).

In terms of domain architecture, Helicase ATP-binding spans Glu-25–Arg-412. Gly-38–Thr-45 lines the ATP pocket. The Beta-hairpin motif lies at Tyr-91–Ile-114. A Helicase C-terminal domain is found at Gln-429–Ile-582. Positions Pro-601 to Leu-625 are disordered. Over residues Ala-614–Leu-625 the composition is skewed to basic and acidic residues. Residues Asn-632–Arg-667 enclose the UVR domain.

The protein belongs to the UvrB family. In terms of assembly, forms a heterotetramer with UvrA during the search for lesions. Interacts with UvrC in an incision complex.

The protein localises to the cytoplasm. Functionally, the UvrABC repair system catalyzes the recognition and processing of DNA lesions. A damage recognition complex composed of 2 UvrA and 2 UvrB subunits scans DNA for abnormalities. Upon binding of the UvrA(2)B(2) complex to a putative damaged site, the DNA wraps around one UvrB monomer. DNA wrap is dependent on ATP binding by UvrB and probably causes local melting of the DNA helix, facilitating insertion of UvrB beta-hairpin between the DNA strands. Then UvrB probes one DNA strand for the presence of a lesion. If a lesion is found the UvrA subunits dissociate and the UvrB-DNA preincision complex is formed. This complex is subsequently bound by UvrC and the second UvrB is released. If no lesion is found, the DNA wraps around the other UvrB subunit that will check the other stand for damage. This Pseudomonas syringae pv. tomato (strain ATCC BAA-871 / DC3000) protein is UvrABC system protein B.